Consider the following 78-residue polypeptide: UPF0291 protein SE_1024 (78 aa).

The disordered stretch occupies residues 53–78 (TKVIDPEGNDVTPEKLKKIQEEKHNK). Residues 64-78 (TPEKLKKIQEEKHNK) show a composition bias toward basic and acidic residues.

The protein belongs to the UPF0291 family.

It is found in the cytoplasm. The protein is UPF0291 protein SE_1024 of Staphylococcus epidermidis (strain ATCC 12228 / FDA PCI 1200).